Here is a 582-residue protein sequence, read N- to C-terminus: Enhancer of polycomb-like protein 1 (582 aa).

Residues R238–N295 adopt a coiled-coil conformation. Residues P323–G351 are disordered. The stretch at T352–K385 forms a coiled coil. Residues A539–Q555 are compositionally biased toward low complexity. A disordered region spans residues A539–S582.

The protein belongs to the enhancer of polycomb family. Component of the NuA4 histone acetyltransferase complex.

The protein localises to the nucleus. Its function is as follows. Component of the NuA4 histone acetyltransferase complex which is involved in transcriptional activation of selected genes principally by acetylation of nucleosomal histone H4 and H2A. The NuA4 complex is also involved in DNA repair. Involved in gene silencing by neighboring heterochromatin, blockage of the silencing spreading along the chromosome, and required for cell cycle progression through G2/M. The polypeptide is Enhancer of polycomb-like protein 1 (epl1) (Aspergillus fumigatus (strain ATCC MYA-4609 / CBS 101355 / FGSC A1100 / Af293) (Neosartorya fumigata)).